Here is a 123-residue protein sequence, read N- to C-terminus: Small ribosomal subunit protein uS12 (123 aa).

The tract at residues 1–28 (MPTIQQLIRNPREPKRTRTKTPALKACP) is disordered. At D89 the chain carries 3-methylthioaspartic acid. The tract at residues 104 to 123 (TQPVKNRKQRRSHYGAKKPK) is disordered. Over residues 108-123 (KNRKQRRSHYGAKKPK) the composition is skewed to basic residues.

The protein belongs to the universal ribosomal protein uS12 family. In terms of assembly, part of the 30S ribosomal subunit. Contacts proteins S8 and S17. May interact with IF1 in the 30S initiation complex.

In terms of biological role, with S4 and S5 plays an important role in translational accuracy. Interacts with and stabilizes bases of the 16S rRNA that are involved in tRNA selection in the A site and with the mRNA backbone. Located at the interface of the 30S and 50S subunits, it traverses the body of the 30S subunit contacting proteins on the other side and probably holding the rRNA structure together. The combined cluster of proteins S8, S12 and S17 appears to hold together the shoulder and platform of the 30S subunit. The polypeptide is Small ribosomal subunit protein uS12 (Hyphomonas neptunium (strain ATCC 15444)).